Reading from the N-terminus, the 206-residue chain is Small ribosomal subunit protein uS4 (206 aa).

Residues 96–156 (GRLDNVVYRM…EKAKNQLRVK (61 aa)) form the S4 RNA-binding domain.

This sequence belongs to the universal ribosomal protein uS4 family. As to quaternary structure, part of the 30S ribosomal subunit. Contacts protein S5. The interaction surface between S4 and S5 is involved in control of translational fidelity.

One of the primary rRNA binding proteins, it binds directly to 16S rRNA where it nucleates assembly of the body of the 30S subunit. Functionally, with S5 and S12 plays an important role in translational accuracy. This chain is Small ribosomal subunit protein uS4, found in Marinobacter nauticus (strain ATCC 700491 / DSM 11845 / VT8) (Marinobacter aquaeolei).